A 216-amino-acid chain; its full sequence is MSLAPSPLVGETPLHAVEVRILGCLIEKQLTTPETYPLTLNAVQLACNQKTSREPLMQLETGEVGRYLRSLEGRKLVHLVMGSRADRWEQRCDKQLELVKPQTVLLGLLMLRGPQTLNELLTRSNRMHDFDDVDEVQHQLERLIARGLAVLLPRQSGQREDRYMHLLGEPADLESLLLSRPASRGDASAPSEDRLVELEARIAALEERLARLEGAQ.

This sequence belongs to the UPF0502 family.

This Ectopseudomonas mendocina (strain ymp) (Pseudomonas mendocina) protein is UPF0502 protein Pmen_2627.